We begin with the raw amino-acid sequence, 305 residues long: Cysteine synthase (305 aa).

Lys45 is modified (N6-(pyridoxal phosphate)lysine). Residues Asn75, 179–183, and Ser266 each bind pyridoxal 5'-phosphate; that span reads GSGGT.

This sequence belongs to the cysteine synthase/cystathionine beta-synthase family. As to quaternary structure, homodimer. It depends on pyridoxal 5'-phosphate as a cofactor.

It carries out the reaction O-acetyl-L-serine + hydrogen sulfide = L-cysteine + acetate. It functions in the pathway amino-acid biosynthesis; L-cysteine biosynthesis; L-cysteine from L-serine: step 2/2. The polypeptide is Cysteine synthase (cysM) (Helicobacter pylori (strain J99 / ATCC 700824) (Campylobacter pylori J99)).